Here is a 785-residue protein sequence, read N- to C-terminus: Ubiquitin carboxyl-terminal hydrolase 1 (785 aa).

2 disordered regions span residues 1 to 21 (MPGV…SKKN) and 33 to 52 (TKRA…ASEY). A compositionally biased stretch (polar residues) spans 7-16 (SESNGLSRGS). A phosphoserine mark is found at Ser16, Ser42, and Ser67. The region spanning 81–785 (VGLNNLGNTC…TPYLLFYKKL (705 aa)) is the USP domain. The active-site Nucleophile is the Cys90. Basic and acidic residues-rich tracts occupy residues 258–275 (EDFK…KSDT) and 286–298 (LSKE…ENQR). Positions 258–336 (EDFKEKLPKG…SPRPSQKKSR (79 aa)) are disordered. Phosphoserine occurs at positions 313 and 475. His593 serves as the catalytic Proton acceptor. Positions 693–723 (TAFAENRNSETSDTTGTHESDRNKESSDQTG) are disordered. The segment covering 708–719 (GTHESDRNKESS) has biased composition (basic and acidic residues). The residue at position 768 (Ser768) is a Phosphoserine.

It belongs to the peptidase C19 family. As to quaternary structure, interacts with FANCD2 and PCNA. Interacts with WDR48. Interacts with ATAD5; the interaction regulates USP1-mediated PCNA deubiquitination. Post-translationally, autocatalytic cleavage of USP1 following UV irradiation inactivates it, leading to an increase in ubiquitinated PCNA, recruitment of POLH and translesion synthesis. Ubiquitinated by the CRL2(KLHDC2) complex following autocatalytic cleavage, leading to its degradation: the CRL2(KLHDC2) complex recognizes the diglycine (Gly-Gly) at the C-terminus.

Its subcellular location is the nucleus. The catalysed reaction is Thiol-dependent hydrolysis of ester, thioester, amide, peptide and isopeptide bonds formed by the C-terminal Gly of ubiquitin (a 76-residue protein attached to proteins as an intracellular targeting signal).. Functionally, negative regulator of DNA damage repair which specifically deubiquitinates monoubiquitinated FANCD2. Also involved in PCNA-mediated translesion synthesis (TLS) by deubiquitinating monoubiquitinated PCNA. Has almost no deubiquitinating activity by itself and requires the interaction with WDR48 to have a high activity. This is Ubiquitin carboxyl-terminal hydrolase 1 (USP1) from Homo sapiens (Human).